The following is a 72-amino-acid chain: Large ribosomal subunit protein bL31 (72 aa).

Zn(2+) is bound by residues Cys16, Cys18, Cys37, and Cys40.

Belongs to the bacterial ribosomal protein bL31 family. Type A subfamily. In terms of assembly, part of the 50S ribosomal subunit. The cofactor is Zn(2+).

Binds the 23S rRNA. The sequence is that of Large ribosomal subunit protein bL31 from Buchnera aphidicola subsp. Schizaphis graminum (strain Sg).